Reading from the N-terminus, the 234-residue chain is DNA repair protein RecO (234 aa).

The protein belongs to the RecO family.

Its function is as follows. Involved in DNA repair and RecF pathway recombination. This is DNA repair protein RecO from Alteromonas mediterranea (strain DSM 17117 / CIP 110805 / LMG 28347 / Deep ecotype).